We begin with the raw amino-acid sequence, 400 residues long: Acetate kinase (400 aa).

Asparagine 7 contributes to the Mg(2+) binding site. Lysine 14 contacts ATP. Residue arginine 91 coordinates substrate. Aspartate 148 serves as the catalytic Proton donor/acceptor. Residues 208-212 (HIGNG), 283-285 (DFR), and 332-336 (GIGEH) contribute to the ATP site. Mg(2+) is bound at residue glutamate 387.

The protein belongs to the acetokinase family. In terms of assembly, homodimer. The cofactor is Mg(2+). Mn(2+) serves as cofactor.

Its subcellular location is the cytoplasm. It catalyses the reaction acetate + ATP = acetyl phosphate + ADP. Its pathway is metabolic intermediate biosynthesis; acetyl-CoA biosynthesis; acetyl-CoA from acetate: step 1/2. Functionally, catalyzes the formation of acetyl phosphate from acetate and ATP. Can also catalyze the reverse reaction. The polypeptide is Acetate kinase (Clostridium beijerinckii (strain ATCC 51743 / NCIMB 8052) (Clostridium acetobutylicum)).